A 202-amino-acid polypeptide reads, in one-letter code: V-type proton ATPase subunit E (202 aa).

Belongs to the V-ATPase E subunit family.

Its function is as follows. Produces ATP from ADP in the presence of a proton gradient across the membrane. The polypeptide is V-type proton ATPase subunit E (Halothermothrix orenii (strain H 168 / OCM 544 / DSM 9562)).